Here is a 100-residue protein sequence, read N- to C-terminus: Large ribosomal subunit protein bL21 (100 aa).

The protein belongs to the bacterial ribosomal protein bL21 family. As to quaternary structure, part of the 50S ribosomal subunit. Contacts protein L20.

In terms of biological role, this protein binds to 23S rRNA in the presence of protein L20. The polypeptide is Large ribosomal subunit protein bL21 (Corynebacterium jeikeium (strain K411)).